Reading from the N-terminus, the 193-residue chain is Potassium-transporting ATPase KdpC subunit (193 aa).

The helical transmembrane segment at 11–31 threads the bilayer; it reads FTLVFMVLLGLVYPFVMTGIA.

It belongs to the KdpC family. In terms of assembly, the system is composed of three essential subunits: KdpA, KdpB and KdpC.

It is found in the cell membrane. In terms of biological role, part of the high-affinity ATP-driven potassium transport (or Kdp) system, which catalyzes the hydrolysis of ATP coupled with the electrogenic transport of potassium into the cytoplasm. This subunit acts as a catalytic chaperone that increases the ATP-binding affinity of the ATP-hydrolyzing subunit KdpB by the formation of a transient KdpB/KdpC/ATP ternary complex. The polypeptide is Potassium-transporting ATPase KdpC subunit (Caldanaerobacter subterraneus subsp. tengcongensis (strain DSM 15242 / JCM 11007 / NBRC 100824 / MB4) (Thermoanaerobacter tengcongensis)).